Reading from the N-terminus, the 308-residue chain is MARYMIKRFWAMAATILVITTLTFVLMKVIPGSPFNEERGTNEAVQKNLEAYYHLDDPLIFQYIFYLKSIITFDFGPSIKKPSDSVNDMLERGFPVSFELGMTAIVIAVISGLVLGVIAALRRNGFLDYAAMSLAVLGISIPNFILATLLIQQFAVNLKLFPAATWTSPIHMVLPTAALAVGPMAIIARLTRSSMVEVLTQDYIRTAKAKGLSPFKIIVKHALRNALMPVITVLGTLVASILTGSFVIEKIFAIPGMGKYFVESINQRDYPVIMGTTVFYSVILIIMLFLVDLAYGLLDPRIKLHKKG.

The next 7 helical transmembrane spans lie at 10–30 (WAMA…MKVI), 59–79 (LIFQ…GPSI), 100–120 (LGMT…VIAA), 131–151 (AMSL…TLLI), 168–188 (SPIH…AIIA), 228–248 (MPVI…SFVI), and 278–298 (VFYS…YGLL). The ABC transmembrane type-1 domain maps to 94–295 (FPVSFELGMT…IMLFLVDLAY (202 aa)).

The protein belongs to the binding-protein-dependent transport system permease family. OppBC subfamily.

Its subcellular location is the cell membrane. Probably part of the ABC transporter DppBCDE involved in dipeptide transport. Responsible for the translocation of the substrate across the membrane. This is Dipeptide transport system permease protein DppB (dppB) from Bacillus subtilis (strain 168).